The chain runs to 126 residues: Histone H2B type 1-C/E/G (126 aa).

Over residues 1–12 the composition is skewed to low complexity; that stretch reads MPEPAKSAPAPK. The interval 1 to 36 is disordered; it reads MPEPAKSAPAPKKGSKKAVTKAQKKDGKKRKRSRKE. Pro-2 is subject to N-acetylproline. At Glu-3 the chain carries ADP-ribosyl glutamic acid. Lys-6 bears the N6-(2-hydroxyisobutyryl)lysine; alternate mark. Lys-6 carries the post-translational modification N6-(beta-hydroxybutyryl)lysine; alternate. Residue Lys-6 is modified to N6-acetyllysine; alternate. Residue Lys-6 is modified to N6-butyryllysine; alternate. Lys-6 is subject to N6-crotonyllysine; alternate. Lys-6 carries the N6-lactoyllysine; alternate modification. Lys-6 is covalently cross-linked (Glycyl lysine isopeptide (Lys-Gly) (interchain with G-Cter in SUMO2); alternate). Ser-7 is modified (ADP-ribosylserine). Lys-12 is subject to N6-(beta-hydroxybutyryl)lysine; alternate. An N6-acetyllysine; alternate mark is found at Lys-12 and Lys-13. Lys-12 and Lys-13 each carry N6-crotonyllysine; alternate. Lys-12 is modified (N6-lactoyllysine; alternate). N6-(2-hydroxyisobutyryl)lysine; alternate is present on Lys-13. At Ser-15 the chain carries Phosphoserine; by STK4/MST1. 4 positions are modified to N6-acetyllysine; alternate: Lys-16, Lys-17, Lys-21, and Lys-24. N6-crotonyllysine; alternate occurs at positions 16, 17, 21, and 24. 4 positions are modified to N6-lactoyllysine; alternate: Lys-16, Lys-17, Lys-21, and Lys-24. Lys-17 carries the N6-glutaryllysine; alternate modification. 2 positions are modified to N6-(2-hydroxyisobutyryl)lysine; alternate: Lys-21 and Lys-24. Lys-21 is subject to N6-(beta-hydroxybutyryl)lysine; alternate. Lys-21 carries the N6-butyryllysine; alternate modification. Lys-21 is covalently cross-linked (Glycyl lysine isopeptide (Lys-Gly) (interchain with G-Cter in SUMO2); alternate). Residue Lys-25 is modified to N6-(2-hydroxyisobutyryl)lysine. Lys-35 carries the post-translational modification N6-(2-hydroxyisobutyryl)lysine; alternate. The residue at position 35 (Lys-35) is an N6-(beta-hydroxybutyryl)lysine; alternate. Position 35 is an N6-crotonyllysine; alternate (Lys-35). The residue at position 35 (Lys-35) is an N6-glutaryllysine; alternate. At Lys-35 the chain carries N6-succinyllysine; alternate. Lys-35 participates in a covalent cross-link: Glycyl lysine isopeptide (Lys-Gly) (interchain with G-Cter in ubiquitin); alternate. Position 36 is a polyADP-ribosyl glutamic acid (Glu-36). Ser-37 carries the phosphoserine; by AMPK modification. N6-(2-hydroxyisobutyryl)lysine; alternate is present on residues Lys-44, Lys-47, and Lys-58. N6-lactoyllysine; alternate is present on Lys-44. An N6-glutaryllysine; alternate mark is found at Lys-44 and Lys-47. Residue Lys-47 is modified to N6-methyllysine; alternate. At Lys-58 the chain carries N6,N6-dimethyllysine; alternate. The residue at position 80 (Arg-80) is a Dimethylated arginine. Lys-86 bears the N6-(2-hydroxyisobutyryl)lysine; alternate mark. Position 86 is an N6-acetyllysine; alternate (Lys-86). Lys-86 carries the post-translational modification N6-lactoyllysine; alternate. Position 86 is an N6,N6,N6-trimethyllysine; alternate (Lys-86). An omega-N-methylarginine mark is found at Arg-87 and Arg-93. At Lys-109 the chain carries N6-(2-hydroxyisobutyryl)lysine; alternate. An N6-(beta-hydroxybutyryl)lysine; alternate modification is found at Lys-109. Lys-109 is modified (N6-lactoyllysine; alternate). Residue Lys-109 is modified to N6-glutaryllysine; alternate. At Lys-109 the chain carries N6-methyllysine; alternate. The O-linked (GlcNAc) serine glycan is linked to Ser-113. Thr-116 is modified (phosphothreonine). Residues Lys-117 and Lys-121 each carry the N6-(2-hydroxyisobutyryl)lysine; alternate modification. The residue at position 117 (Lys-117) is an N6-(beta-hydroxybutyryl)lysine; alternate. Residues Lys-117 and Lys-121 each carry the N6-lactoyllysine; alternate modification. An N6-glutaryllysine; alternate mark is found at Lys-117 and Lys-121. 2 positions are modified to N6-succinyllysine; alternate: Lys-117 and Lys-121. Position 117 is an N6-methylated lysine; alternate (Lys-117). A Glycyl lysine isopeptide (Lys-Gly) (interchain with G-Cter in ubiquitin); alternate cross-link involves residue Lys-121.

The protein belongs to the histone H2B family. The nucleosome is a histone octamer containing two molecules each of H2A, H2B, H3 and H4 assembled in one H3-H4 heterotetramer and two H2A-H2B heterodimers. The octamer wraps approximately 147 bp of DNA. Interacts with VRK1; the interaction is mediated by the nucleosome acidic patch, a cluster of negatively charged residues of H2A and H2B forming a cleft within the nucleosome core. In terms of processing, monoubiquitination at Lys-35 (H2BK34Ub) by the MSL1/MSL2 dimer is required for histone H3 'Lys-4' (H3K4me) and 'Lys-79' (H3K79me) methylation and transcription activation at specific gene loci, such as HOXA9 and MEIS1 loci. Similarly, monoubiquitination at Lys-121 (H2BK120Ub) by the RNF20/40 complex gives a specific tag for epigenetic transcriptional activation and is also prerequisite for histone H3 'Lys-4' and 'Lys-79' methylation. It also functions cooperatively with the FACT dimer to stimulate elongation by RNA polymerase II. H2BK120Ub also acts as a regulator of mRNA splicing: deubiquitination by USP49 is required for efficient cotranscriptional splicing of a large set of exons. Phosphorylated on Ser-15 (H2BS14ph) by STK4/MST1 during apoptosis; which facilitates apoptotic chromatin condensation. Also phosphorylated on Ser-15 in response to DNA double strand breaks (DSBs), and in correlation with somatic hypermutation and immunoglobulin class-switch recombination. Phosphorylation at Ser-37 (H2BS36ph) by AMPK in response to stress promotes transcription. Post-translationally, glcNAcylation at Ser-113 promotes monoubiquitination of Lys-121. It fluctuates in response to extracellular glucose, and associates with transcribed genes. In terms of processing, ADP-ribosylated by PARP1 or PARP2 on Ser-7 (H2BS6ADPr) in response to DNA damage. H2BS6ADPr promotes recruitment of CHD1L. Mono-ADP-ribosylated on Glu-3 (H2BE2ADPr) by PARP3 in response to single-strand breaks. Poly ADP-ribosylation on Glu-36 (H2BE35ADPr) by PARP1 regulates adipogenesis: it inhibits phosphorylation at Ser-37 (H2BS36ph), thereby blocking expression of pro-adipogenetic genes. Crotonylation (Kcr) is specifically present in male germ cells and marks testis-specific genes in post-meiotic cells, including X-linked genes that escape sex chromosome inactivation in haploid cells. Crotonylation marks active promoters and enhancers and confers resistance to transcriptional repressors. It is also associated with post-meiotically activated genes on autosomes. Post-translationally, hydroxybutyrylation of histones is induced by starvation. In terms of processing, lactylated in macrophages by EP300/P300 by using lactoyl-CoA directly derived from endogenous or exogenous lactate, leading to stimulates gene transcription.

The protein resides in the nucleus. It localises to the chromosome. Core component of nucleosome. Nucleosomes wrap and compact DNA into chromatin, limiting DNA accessibility to the cellular machineries which require DNA as a template. Histones thereby play a central role in transcription regulation, DNA repair, DNA replication and chromosomal stability. DNA accessibility is regulated via a complex set of post-translational modifications of histones, also called histone code, and nucleosome remodeling. In Mus musculus (Mouse), this protein is Histone H2B type 1-C/E/G.